A 201-amino-acid chain; its full sequence is MIKLIVGLGNPGAEYTATRHNAGFWLVDQLAREAGATLRDERRFHGFYAKARLYGEEVHLLEPQTYMNRSGQSVVALAHFFKILPNEILVAHDELDLPPGAVKLKLGGGSGGHNGLKDISAHLSSQQYWRLRIGIGHPRDMIPESARAGAKPDVANFVLKPPRKEEQDVIDAAIERALAVMPAVVKGETERAMMQLHRNGA.

Residue Tyr-15 participates in tRNA binding. The active-site Proton acceptor is His-20. TRNA is bound by residues Tyr-66, Asn-68, and Asn-114.

This sequence belongs to the PTH family. In terms of assembly, monomer.

It is found in the cytoplasm. The catalysed reaction is an N-acyl-L-alpha-aminoacyl-tRNA + H2O = an N-acyl-L-amino acid + a tRNA + H(+). Functionally, hydrolyzes ribosome-free peptidyl-tRNAs (with 1 or more amino acids incorporated), which drop off the ribosome during protein synthesis, or as a result of ribosome stalling. In terms of biological role, catalyzes the release of premature peptidyl moieties from peptidyl-tRNA molecules trapped in stalled 50S ribosomal subunits, and thus maintains levels of free tRNAs and 50S ribosomes. This chain is Peptidyl-tRNA hydrolase, found in Burkholderia thailandensis (strain ATCC 700388 / DSM 13276 / CCUG 48851 / CIP 106301 / E264).